A 255-amino-acid polypeptide reads, in one-letter code: Small ribosomal subunit protein eS1 (255 aa).

The segment covering 1-18 has biased composition (basic residues); sequence MAVGKNKRLSKGKKGLKK. The disordered stretch occupies residues 1–28; that stretch reads MAVGKNKRLSKGKKGLKKRTQDPFSRKD. Position 2 is an N-acetylalanine; partial (A2). Positions 19-28 are enriched in basic and acidic residues; sequence RTQDPFSRKD.

It belongs to the eukaryotic ribosomal protein eS1 family. In terms of assembly, component of the small ribosomal subunit. Mature ribosomes consist of a small (40S) and a large (60S) subunit. The 40S subunit contains about 33 different proteins and 1 molecule of RNA (18S). The 60S subunit contains about 49 different proteins and 3 molecules of RNA (25S, 5.8S and 5S).

Its subcellular location is the cytoplasm. The protein is Small ribosomal subunit protein eS1 of Ajellomyces capsulatus (strain H143) (Darling's disease fungus).